A 381-amino-acid polypeptide reads, in one-letter code: MALDKRIWMHFDLLPFVFIIPLLVVSFLLIFESSAVLSLKQGVYYAIGFILFWIVFFIPFRKLGRWLFVFYWACVILLALVDFMGYSKLGAQRWLVIPFISITLQPSEPVKIAILLLLAHLIKINPPPFKGYDWGMFLKLSFYICLPAALILKQPDLGTALIVLIMGFGILLIVGLRTRVWLPLFIALLVASPIAYHFLHDYQKKRIADFLSEKPNYHVMQSIIAIGSGGFLGKSKEACTQTKFKFLPIATSDFIFAYFVERFGFLGAMLLFAIYIGLSLHLFFYLFESNSDWFLKIVALGISILIFVYSSVNIAMTLGLAPVVGIPLPLFSYGGSSFITFMILFGILENLLAFRYIFGYNSKPSFGNFGFLAQLVRALGS.

10 consecutive transmembrane segments (helical) span residues 11–31 (FDLL…LLIF), 40–60 (KQGV…FIPF), 66–86 (WLFV…FMGY), 99–119 (FISI…LLLA), 132–152 (YDWG…ALIL), 156–176 (DLGT…IVGL), 180–200 (VWLP…HFLH), 263–283 (FGFL…LHLF), 297–317 (IVAL…IAMT), and 328–348 (LPLF…FGIL).

This sequence belongs to the SEDS family. MrdB/RodA subfamily.

The protein resides in the cell inner membrane. It catalyses the reaction [GlcNAc-(1-&gt;4)-Mur2Ac(oyl-L-Ala-gamma-D-Glu-L-Lys-D-Ala-D-Ala)](n)-di-trans,octa-cis-undecaprenyl diphosphate + beta-D-GlcNAc-(1-&gt;4)-Mur2Ac(oyl-L-Ala-gamma-D-Glu-L-Lys-D-Ala-D-Ala)-di-trans,octa-cis-undecaprenyl diphosphate = [GlcNAc-(1-&gt;4)-Mur2Ac(oyl-L-Ala-gamma-D-Glu-L-Lys-D-Ala-D-Ala)](n+1)-di-trans,octa-cis-undecaprenyl diphosphate + di-trans,octa-cis-undecaprenyl diphosphate + H(+). It functions in the pathway cell wall biogenesis; peptidoglycan biosynthesis. In terms of biological role, peptidoglycan polymerase that is essential for cell wall elongation. This chain is Peptidoglycan glycosyltransferase MrdB, found in Helicobacter pylori (strain ATCC 700392 / 26695) (Campylobacter pylori).